The chain runs to 657 residues: Filensin (657 aa).

The segment at 1–38 (MYRSSFLREVRKEKYERSDAYDELRGSPEFDSLAQAQG) is head. The IF rod domain maps to 38–318 (GLENLQELNE…RIIENEDSRL (281 aa)). The segment at 39–73 (LENLQELNERFASYINRARVLEQRNTILRKQLETF) is coil 1A. The tract at residues 74–82 (QRMDELVGL) is linker 1. The coil 1B stretch occupies residues 83-182 (DEAFAGQIEF…RYKKNLMEIQ (100 aa)). Residues 183 to 199 (TYVNILQQIIQTTPRVS) form a linker 12 region. The interval 200 to 318 (PITTGISEEK…RIIENEDSRL (119 aa)) is coil 2. The interval 319 to 657 (NSAIAGTPVT…SKKKPGDKGS (339 aa)) is tail. Disordered stretches follow at residues 503–530 (IGGD…ICER) and 565–593 (PDVS…TDHD). Positions 519-530 (PSEKEKRDICER) are enriched in basic and acidic residues.

Belongs to the intermediate filament family. Detected in eye lens fiber cells (at protein level). Detected in embryonic eye lens.

The protein resides in the cell membrane. Its subcellular location is the cytoplasm. It is found in the cytoskeleton. The protein localises to the cell cortex. In terms of biological role, required for the correct formation of lens intermediate filaments. This is Filensin (BFSP1) from Gallus gallus (Chicken).